A 305-amino-acid polypeptide reads, in one-letter code: Ribonucleoside-diphosphate reductase small subunit (305 aa).

The Fe cation site is built by Glu64, Glu94, and His97. Residue Tyr101 is part of the active site. The chain crosses the membrane as a helical span at residues 150 to 170 (VLIFYLIEGVFFISSFYCIGL). Residues Glu157, Glu191, and His194 each contribute to the Fe cation site.

Belongs to the ribonucleoside diphosphate reductase small chain family. In terms of assembly, heterotetramer composed of a homodimer of the large subunit (R1) and a homodimer of the small subunit (R2). Larger multisubunit protein complex are also active, composed of (R1)n(R2)n. Requires Fe cation as cofactor.

It is found in the host membrane. The enzyme catalyses a 2'-deoxyribonucleoside 5'-diphosphate + [thioredoxin]-disulfide + H2O = a ribonucleoside 5'-diphosphate + [thioredoxin]-dithiol. Ribonucleoside-diphosphate reductase holoenzyme provides the precursors necessary for viral DNA synthesis. Allows virus growth in non-dividing cells, as well as reactivation from latency in infected hosts. Catalyzes the biosynthesis of deoxyribonucleotides from the corresponding ribonucleotides. The polypeptide is Ribonucleoside-diphosphate reductase small subunit (Alcelaphine herpesvirus 1 (strain C500) (AlHV-1)).